The sequence spans 262 residues: MFKEKVGKIILYPVYKFYEKILWNEIKNGPFPQHVGIIPDGNRRWARANNLSINDAYYSGYRKLKQVLLWLLEMGIKNITVFALSTENCDKRSNLELNTIFNYIKAGLEELLYGEIIYKYEVKVRAIGLIYKLPLDLLEVLNQLSKKTENFNKRKLTLAICYGGRQEIIDATKKIIADYEKGKIKLDDINENIFRQYLYDKELEDIDLVIRSSGEIRISNFLLWHIAYSELFFVDTYWPDFRKIDLWRAIRSYQKRKRNFGA.

The active site involves aspartate 40. Position 40 (aspartate 40) interacts with Mg(2+). Substrate is bound by residues 41–44, tryptophan 45, and 85–87; these read GNRR and STE. Asparagine 88 (proton acceptor) is an active-site residue. Substrate-binding positions include arginine 92, arginine 211, and 217–219; that span reads RIS. Mg(2+) is bound at residue glutamate 230.

This sequence belongs to the UPP synthase family. In terms of assembly, homodimer. Requires Mg(2+) as cofactor.

It carries out the reaction geranylgeranyl diphosphate + 7 isopentenyl diphosphate = tri-trans,hepta-cis-undecaprenyl diphosphate + 7 diphosphate. In terms of biological role, catalyzes the sequential condensation of isopentenyl diphosphate (IPP) with geranylgeranyl diphosphate (GGPP) to yield (2Z,6Z,10Z,14Z,18Z,22Z,26Z,30E,34E,38E)-undecaprenyl diphosphate (tritrans,heptacis-UPP). It is probably the precursor of glycosyl carrier lipids. The polypeptide is Tritrans,polycis-undecaprenyl-diphosphate synthase (geranylgeranyl-diphosphate specific) (Sulfurisphaera tokodaii (strain DSM 16993 / JCM 10545 / NBRC 100140 / 7) (Sulfolobus tokodaii)).